Reading from the N-terminus, the 372-residue chain is GTPase Obg (372 aa).

An Obg domain is found at 1–159; sequence MKFIDEARIE…RMLKLELKVL (159 aa). Positions 128-147 are disordered; it reads LHFKSSTNRAPRQKTDGKPG. The region spanning 160 to 334 is the OBG-type G domain; it reads ADVGLLGMPN…LVYAIYDYLA (175 aa). GTP is bound by residues 166-173, 191-195, 213-216, 284-287, and 315-317; these read GMPNAGKS, FTTLA, DIPG, NKLD, and SAL. Mg(2+) contacts are provided by serine 173 and threonine 193.

This sequence belongs to the TRAFAC class OBG-HflX-like GTPase superfamily. OBG GTPase family. Monomer. It depends on Mg(2+) as a cofactor.

The protein resides in the cytoplasm. Its function is as follows. An essential GTPase which binds GTP, GDP and possibly (p)ppGpp with moderate affinity, with high nucleotide exchange rates and a fairly low GTP hydrolysis rate. Plays a role in control of the cell cycle, stress response, ribosome biogenesis and in those bacteria that undergo differentiation, in morphogenesis control. This chain is GTPase Obg, found in Burkholderia thailandensis (strain ATCC 700388 / DSM 13276 / CCUG 48851 / CIP 106301 / E264).